The following is a 316-amino-acid chain: Porphobilinogen deaminase (316 aa).

Residue Cys245 is modified to S-(dipyrrolylmethanemethyl)cysteine.

Belongs to the HMBS family. Monomer. Requires dipyrromethane as cofactor.

It catalyses the reaction 4 porphobilinogen + H2O = hydroxymethylbilane + 4 NH4(+). The protein operates within porphyrin-containing compound metabolism; protoporphyrin-IX biosynthesis; coproporphyrinogen-III from 5-aminolevulinate: step 2/4. It functions in the pathway porphyrin-containing compound metabolism; chlorophyll biosynthesis. Tetrapolymerization of the monopyrrole PBG into the hydroxymethylbilane pre-uroporphyrinogen in several discrete steps. The polypeptide is Porphobilinogen deaminase (Prochlorococcus marinus (strain MIT 9312)).